Here is a 278-residue protein sequence, read N- to C-terminus: MAEELVQSEKLLSLDPKLQEDFQQKVHDIRRKRKANALTPGVIYIGHIPKSLIEPQLQEYFNQFGTVTRLRLSRSKKTGNSKGYAYVEYECDEVAKIVADTMNNYLFCERLLKCEFVTPEKVHPRLFIGCNTRFRKPTKPAVTRYNSKRNKEEVKKMTQRMISKEYKLRKRLAEKGIDYDFPGFAAHREMRKELTCDANTSVSSQDPTPVCTPTVLERRKSVRLEQIEDEEEDDDEVVLKLPQRDDEVVVKLPQKVSSAAKRQKISKLGKKTNIKELK.

Positions Gly-41–Pro-119 constitute an RRM domain.

It localises to the nucleus. It is found in the nucleolus. In Xenopus laevis (African clawed frog), this protein is MKI67 FHA domain-interacting nucleolar phosphoprotein-like (nifk).